We begin with the raw amino-acid sequence, 338 residues long: Nicotinate-nucleotide--dimethylbenzimidazole phosphoribosyltransferase (338 aa).

Glutamate 306 serves as the catalytic Proton acceptor.

It belongs to the CobT family.

The enzyme catalyses 5,6-dimethylbenzimidazole + nicotinate beta-D-ribonucleotide = alpha-ribazole 5'-phosphate + nicotinate + H(+). The protein operates within nucleoside biosynthesis; alpha-ribazole biosynthesis; alpha-ribazole from 5,6-dimethylbenzimidazole: step 1/2. Functionally, catalyzes the synthesis of alpha-ribazole-5'-phosphate from nicotinate mononucleotide (NAMN) and 5,6-dimethylbenzimidazole (DMB). This chain is Nicotinate-nucleotide--dimethylbenzimidazole phosphoribosyltransferase, found in Cereibacter sphaeroides (strain ATCC 17023 / DSM 158 / JCM 6121 / CCUG 31486 / LMG 2827 / NBRC 12203 / NCIMB 8253 / ATH 2.4.1.) (Rhodobacter sphaeroides).